A 299-amino-acid polypeptide reads, in one-letter code: Taste receptor type 2 member 50 (299 aa).

Residue Met1 is a topological domain, extracellular. Residues 2-22 (IPFLHIFFSVLILVLFVLGNF) traverse the membrane as a helical segment. Residues 23–55 (ANGFIALVNFIDWVKRKKISLADQILTALAVSR) lie on the Cytoplasmic side of the membrane. A helical membrane pass occupies residues 56–76 (VGLLWALLLNWYLTELNPAFY). Residues 77-87 (SVELRITSYNA) lie on the Extracellular side of the membrane. The chain crosses the membrane as a helical span at residues 88–108 (WVVTNHFSMWLAASLSIFYLL). Topologically, residues 109–126 (KIANFSNLSFLNLKRRVR) are cytoplasmic. Residues 127 to 147 (SIILVILLGSLLFLVCHLLAV) traverse the membrane as a helical segment. The Extracellular portion of the chain corresponds to 148 to 181 (NMDENMWTEEYEGNMTGKMKLRNAAHLSYMTVTT). A glycan (N-linked (GlcNAc...) asparagine) is linked at Asn161. A helical membrane pass occupies residues 182-202 (LWSFIPFMLSLISFLMLIFSL). Topologically, residues 203-229 (CKHLKKMQLHGEGSRDPSTTVHIKALQ) are cytoplasmic. A helical transmembrane segment spans residues 230–250 (TLISFLLLCAIFFLFLIISVW). Over 251–259 (SPRRLQNEP) the chain is Extracellular. Residues 260–280 (VFMVCKAVGNIYLSFDSFVLI) form a helical membrane-spanning segment. Topologically, residues 281–299 (WRTKKLKHIFLLILCQIRC) are cytoplasmic.

It belongs to the G-protein coupled receptor T2R family.

It is found in the membrane. In terms of biological role, receptor that may play a role in the perception of bitterness and is gustducin-linked. May play a role in sensing the chemical composition of the gastrointestinal content. The activity of this receptor may stimulate alpha gustducin, mediate PLC-beta-2 activation and lead to the gating of TRPM5. This Macaca mulatta (Rhesus macaque) protein is Taste receptor type 2 member 50 (TAS2R50).